Reading from the N-terminus, the 102-residue chain is Citrate lyase acyl carrier protein (102 aa).

O-(phosphoribosyl dephospho-coenzyme A)serine is present on Ser-14.

Belongs to the CitD family. As to quaternary structure, oligomer with a subunit composition of (alpha,beta,gamma)6.

It is found in the cytoplasm. Covalent carrier of the coenzyme of citrate lyase. The protein is Citrate lyase acyl carrier protein of Serratia proteamaculans (strain 568).